The chain runs to 777 residues: Ral guanine nucleotide dissociation stimulator-like 2 (777 aa).

Residues 1–54 (MLPRPLRLLLDTSPPGGVVLSSFRSRDPEEGGGPGGLVVGGGQEEEEEEEEEAP) form a disordered region. Ser13 carries the post-translational modification Phosphoserine. Gly residues predominate over residues 31–42 (GGGPGGLVVGGG). Over residues 43 to 54 (QEEEEEEEEEAP) the composition is skewed to acidic residues. Residues 88-212 (SSRRLRAGTL…GSADLIRNLR (125 aa)) enclose the N-terminal Ras-GEF domain. The 271-residue stretch at 243 to 513 (LADHLAEQLT…HRVSCEVEPP (271 aa)) folds into the Ras-GEF domain. Phosphoserine is present on Ser409. Low complexity-rich tracts occupy residues 581–610 (SLDS…SPRP) and 618–632 (ASCG…EEAS). Disordered stretches follow at residues 581–644 (SLDS…GSGP) and 734–766 (RRSS…PRIK). The span at 633–644 (GGTGYGGEGSGP) shows a compositional bias: gly residues. Positions 648 to 735 (DCRIIRVQME…HDFLLRQRRR (88 aa)) constitute a Ras-associating domain. Residues 740–755 (TPGVTSGPSASGTPPS) show a composition bias toward low complexity.

In terms of assembly, interacts with SAMD9.

Probable guanine nucleotide exchange factor. Putative effector of Ras and/or Rap. Associates with the GTP-bound form of Rap 1A and H-Ras in vitro. This chain is Ral guanine nucleotide dissociation stimulator-like 2 (RGL2), found in Homo sapiens (Human).